The primary structure comprises 388 residues: Beta-hexosaminidase LpqI (388 aa).

The N-terminal stretch at 1–19 (MAFPRTLAILAAAAALVVA) is a signal peptide. Cys-20 carries the N-palmitoyl cysteine lipid modification. Cys-20 is lipidated: S-diacylglycerol cysteine. Residues Asp-123, Arg-131, Arg-193, and 223 to 224 (KH) each bind substrate. His-236 functions as the Proton donor/acceptor in the catalytic mechanism. Asp-311 serves as the catalytic Nucleophile.

The protein belongs to the glycosyl hydrolase 3 family.

Its subcellular location is the cell inner membrane. The enzyme catalyses Hydrolysis of terminal non-reducing N-acetyl-D-hexosamine residues in N-acetyl-beta-D-hexosaminides.. Its pathway is cell wall biogenesis; peptidoglycan recycling. Functionally, plays a role in peptidoglycan recycling by cleaving the terminal beta-1,4-linked N-acetylglucosamine (GlcNAc) from peptidoglycan fragments. Acts as a regulator for GlcNAc-MurNAc levels by cleaving disaccharides and allowing the breakdown of MurNAc. In Mycobacterium bovis (strain BCG / Pasteur 1173P2), this protein is Beta-hexosaminidase LpqI.